The sequence spans 184 residues: Thymidine kinase (184 aa).

Residues 10–17 (GPMYSGKT) and 83–86 (DEVQ) contribute to the ATP site. The active-site Proton acceptor is the Glu84. Residues Cys140, Cys143, Cys173, and Cys176 each coordinate Zn(2+).

This sequence belongs to the thymidine kinase family. Homotetramer.

The protein localises to the cytoplasm. It carries out the reaction thymidine + ATP = dTMP + ADP + H(+). The sequence is that of Thymidine kinase from Thermotoga sp. (strain RQ2).